Reading from the N-terminus, the 291-residue chain is MFSGSIPALVTPFRDGAFDAPTFARLVDWQVKEGTSALVPCGTTGESPTLSFDEHYRVIDCCIEAAAGRVPVIAGCGSNDTATAIRHMRHAQASGADAALIVAPYYNRPSQEGMIAHFKALADASDLPIVVYNVPGRTVADISAETMCKLAEIPTVVAVKDASGDLARVTVHRKGARHGFCQLSGNDELWLPHAVMGGAGCISVTANVAPRLCADFAAACAAGEWTRALALHDRLFDLHKAMFSDTSPGPVKYALSRVHDWFSPEVRLPIIPASGASRAVVDAALASAGVI.

T44 is a binding site for pyruvate. Y132 functions as the Proton donor/acceptor in the catalytic mechanism. The active-site Schiff-base intermediate with substrate is K160. I202 contributes to the pyruvate binding site.

This sequence belongs to the DapA family. In terms of assembly, homotetramer; dimer of dimers.

The protein resides in the cytoplasm. The enzyme catalyses L-aspartate 4-semialdehyde + pyruvate = (2S,4S)-4-hydroxy-2,3,4,5-tetrahydrodipicolinate + H2O + H(+). The protein operates within amino-acid biosynthesis; L-lysine biosynthesis via DAP pathway; (S)-tetrahydrodipicolinate from L-aspartate: step 3/4. Functionally, catalyzes the condensation of (S)-aspartate-beta-semialdehyde [(S)-ASA] and pyruvate to 4-hydroxy-tetrahydrodipicolinate (HTPA). This Sphingopyxis alaskensis (strain DSM 13593 / LMG 18877 / RB2256) (Sphingomonas alaskensis) protein is 4-hydroxy-tetrahydrodipicolinate synthase.